The following is a 348-amino-acid chain: Tocopherol O-methyltransferase, chloroplastic (348 aa).

The transit peptide at 1–51 (MKATLAAPSSLTSLPYRTNSSFGSKSSLLFRSPSSSSSVSMTTTRGNVAVA) directs the protein to the chloroplast. An N-acetylalanine modification is found at alanine 52. The tract at residues 130–139 (VVDVGCGIGG) is SAM motif I. The SAM motif II stretch occupies residues 193–201 (GKFDLVWSM). Residues 220–229 (VAAPGGRIII) are SAM motif III.

It belongs to the class I-like SAM-binding methyltransferase superfamily. gTMT family.

Its subcellular location is the plastid. The protein localises to the chloroplast. The enzyme catalyses gamma-tocopherol + S-adenosyl-L-methionine = (+)-alpha-tocopherol + S-adenosyl-L-homocysteine + H(+). It catalyses the reaction delta-tocotrienol + S-adenosyl-L-methionine = beta-tocotrienol + S-adenosyl-L-homocysteine + H(+). The catalysed reaction is gamma-tocotrienol + S-adenosyl-L-methionine = alpha-tocotrienol + S-adenosyl-L-homocysteine + H(+). It carries out the reaction delta-tocopherol + S-adenosyl-L-methionine = beta-tocopherol + S-adenosyl-L-homocysteine + H(+). It participates in cofactor biosynthesis; tocopherol biosynthesis. Functionally, involved in the synthesis of tocopherol (vitamin E). Methylates gamma- and delta-tocopherol to form beta- and alpha-tocopherol, respectively. This Arabidopsis thaliana (Mouse-ear cress) protein is Tocopherol O-methyltransferase, chloroplastic (VTE4).